Here is a 356-residue protein sequence, read N- to C-terminus: tRNA-specific 2-thiouridylase MnmA (356 aa).

ATP contacts are provided by residues 6–13 (GMSGGVDS) and Leu-32. The Nucleophile role is filled by Cys-102. Cysteines 102 and 200 form a disulfide. Residue Gly-127 coordinates ATP. The tract at residues 150–152 (RDQ) is interaction with tRNA. The Cysteine persulfide intermediate role is filled by Cys-200. The tract at residues 302 to 303 (RY) is interaction with tRNA.

The protein belongs to the MnmA/TRMU family.

The protein localises to the cytoplasm. The enzyme catalyses S-sulfanyl-L-cysteinyl-[protein] + uridine(34) in tRNA + AH2 + ATP = 2-thiouridine(34) in tRNA + L-cysteinyl-[protein] + A + AMP + diphosphate + H(+). Its function is as follows. Catalyzes the 2-thiolation of uridine at the wobble position (U34) of tRNA, leading to the formation of s(2)U34. This is tRNA-specific 2-thiouridylase MnmA from Aquifex aeolicus (strain VF5).